We begin with the raw amino-acid sequence, 206 residues long: LexA repressor (206 aa).

Residues 28 to 48 constitute a DNA-binding region (H-T-H motif); it reads RAEIATRLGFKSANAAEEHLK. Active-site for autocatalytic cleavage activity residues include Ser-123 and Lys-160.

The protein belongs to the peptidase S24 family. As to quaternary structure, homodimer.

It carries out the reaction Hydrolysis of Ala-|-Gly bond in repressor LexA.. Represses a number of genes involved in the response to DNA damage (SOS response), including recA and lexA. In the presence of single-stranded DNA, RecA interacts with LexA causing an autocatalytic cleavage which disrupts the DNA-binding part of LexA, leading to derepression of the SOS regulon and eventually DNA repair. This chain is LexA repressor, found in Shewanella baltica (strain OS223).